Here is a 432-residue protein sequence, read N- to C-terminus: Asparagine--tRNA ligase (432 aa).

Belongs to the class-II aminoacyl-tRNA synthetase family. In terms of assembly, homodimer.

The protein resides in the cytoplasm. The enzyme catalyses tRNA(Asn) + L-asparagine + ATP = L-asparaginyl-tRNA(Asn) + AMP + diphosphate + H(+). The polypeptide is Asparagine--tRNA ligase (Limosilactobacillus reuteri (strain DSM 20016) (Lactobacillus reuteri)).